A 181-amino-acid chain; its full sequence is Putative NAD(P)H-dependent FMN-containing oxidoreductase YwqN (181 aa).

The protein belongs to the SsuE family. Requires FMN as cofactor.

Its function is as follows. Putative NADPH-dependent oxidoreductase. This Bacillus subtilis (strain 168) protein is Putative NAD(P)H-dependent FMN-containing oxidoreductase YwqN (ywqN).